Consider the following 254-residue polypeptide: Short-chain dehydrogenase/reductase SDRA (254 aa).

Ile15–Val39 lines the NADP(+) pocket. A substrate-binding site is contributed by Ser146. Residue Tyr159 is the Proton acceptor of the active site. A Microbody targeting signal motif is present at residues Ser252–Leu254.

Belongs to the short-chain dehydrogenases/reductases (SDR) family.

It is found in the peroxisome. Its function is as follows. Involved with IBR3 and IBR10 in the peroxisomal beta-oxidation of indole-3-butyric acid (IBA) to form indole-3-acetic acid (IAA), a biologically active auxin. May be responsible for catalyzing the dehydrogenation step in the conversion of IBA. May be involved in the peroxisomal activation of 2,4-dichlorophenoxybutyric acid (2,4-DB), a precursor of active auxins that inhibit root growth. The polypeptide is Short-chain dehydrogenase/reductase SDRA (Arabidopsis thaliana (Mouse-ear cress)).